Reading from the N-terminus, the 220-residue chain is IQ domain-containing protein F3 (220 aa).

The span at 1–22 (MELDQDQKVETPEAAENGKDEM) shows a compositional bias: basic and acidic residues. Residues 1–81 (MELDQDQKVE…KQIQDEKTGI (81 aa)) form a disordered region. Acidic residues predominate over residues 23–50 (QLEEQTQDEDTTETETETETETEAEAEG). A coiled-coil region spans residues 69–93 (QAEKQIQDEKTGIKEADRAIQEQTQ). In terms of domain architecture, IQ spans 146–175 (AELAGVKIQAWWRGTLVRRTLLLAILSAWT).

This is IQ domain-containing protein F3 (Iqcf3) from Rattus norvegicus (Rat).